Consider the following 447-residue polypeptide: GTPase Era, mitochondrial (447 aa).

The transit peptide at 1-18 (MTLRSCETFLRRSLRFST) directs the protein to the mitochondrion. The Era-type G domain maps to 109 to 340 (KSLKVAIVGS…RYLFVAAKPC (232 aa)). The G1 stretch occupies residues 117–124 (GSPNAGKS). 117 to 124 (GSPNAGKS) is a GTP binding site. The interval 143 to 147 (HTTRS) is G2. Positions 164–167 (DTPG) are G3. GTP-binding positions include 164 to 168 (DTPGL) and 233 to 236 (NKVD). Positions 233-236 (NKVD) are G4. The interval 318–320 (LSS) is G5. Residues 370-447 (LPKEVPYTMT…RLKISVKLRK (78 aa)) form the KH type-2 domain.

It belongs to the TRAFAC class TrmE-Era-EngA-EngB-Septin-like GTPase superfamily. Era GTPase family.

It localises to the mitochondrion matrix. It is found in the mitochondrion inner membrane. Probable GTPase that plays a role in the mitochondrial ribosomal small subunit assembly. Specifically binds the 12S mitochondrial rRNA (12S mt-rRNA) to a 33 nucleotide section delineating the 3' terminal stem-loop region. May act as a chaperone that protects the 12S mt-rRNA on the 28S mitoribosomal subunit during ribosomal small subunit assembly. In Danio rerio (Zebrafish), this protein is GTPase Era, mitochondrial (eral1).